Consider the following 349-residue polypeptide: Methylthioribose-1-phosphate isomerase (349 aa).

Residues 49-51 (RGA), Arg92, and Gln199 each bind substrate. The active-site Proton donor is the Asp240. A substrate-binding site is contributed by 250-251 (NK).

The protein belongs to the eIF-2B alpha/beta/delta subunits family. MtnA subfamily.

The enzyme catalyses 5-(methylsulfanyl)-alpha-D-ribose 1-phosphate = 5-(methylsulfanyl)-D-ribulose 1-phosphate. It functions in the pathway amino-acid biosynthesis; L-methionine biosynthesis via salvage pathway; L-methionine from S-methyl-5-thio-alpha-D-ribose 1-phosphate: step 1/6. Catalyzes the interconversion of methylthioribose-1-phosphate (MTR-1-P) into methylthioribulose-1-phosphate (MTRu-1-P). In Syntrophobacter fumaroxidans (strain DSM 10017 / MPOB), this protein is Methylthioribose-1-phosphate isomerase.